Consider the following 389-residue polypeptide: MAEPDPSHPLETQAGKVQEAQDSDSDSEGGAAGGEADMDFLRNLFSQTLSLGSQKERLLDELTLEGVARYMQSERCRRVICLVGAGISTSAGIPDFRSPSTGLYDNLEKYHLPYPEAIFEISYFKKHPEPFFALAKELYPGQFKPTICHYFMRLLKDKGLLLRCYTQNIDTLERIAGLEQEDLVEAHGTFYTSHCVSASCRHEYPLSWMKEKIFSEVTPKCEDCQSLVKPDIVFFGESLPARFFSCMQSDFLKVDLLLVMGTSLQVQPFASLISKAPLSTPRLLINKEKAGQSDPFLGMILGLGGGMDFDSKKAYRDVAWLGDCDQGCLALAELLGWKKELEDLVRREHASIDAQSGAEAPNPSTSASPRKSPPPAQDEARTTEREKPQ.

The tract at residues 1-34 (MAEPDPSHPLETQAGKVQEAQDSDSDSEGGAAGG) is disordered. At alanine 2 the chain carries N-acetylalanine. Serine 23, serine 25, serine 27, and serine 53 each carry phosphoserine. One can recognise a Deacetylase sirtuin-type domain in the interval 57–338 (RLLDELTLEG…LALAELLGWK (282 aa)). Residues 85-89 (AGIST) and 95-97 (DFR) each bind NAD(+). Position 100 is a phosphoserine (serine 100). 167–170 (QNID) provides a ligand contact to NAD(+). The active-site Proton acceptor is the histidine 187. Positions 195 and 200 each coordinate Zn(2+). A Phosphoserine modification is found at serine 207. Cysteine 221 and cysteine 224 together coordinate Zn(2+). Residues 262–263 (TS), 286–288 (NKE), and cysteine 324 contribute to the NAD(+) site. The segment at 350-389 (ASIDAQSGAEAPNPSTSASPRKSPPPAQDEARTTEREKPQ) is disordered. Residues serine 368 and serine 372 each carry the phosphoserine modification. Positions 378–389 (DEARTTEREKPQ) are enriched in basic and acidic residues.

It belongs to the sirtuin family. Class I subfamily. As to quaternary structure, interacts with CDC20, FOXO3 and FZR1. Associates with microtubules in primary cortical mature neurons. Homotrimer. Interacts (via both phosphorylated, unphosphorylated, active or inactive forms) with HDAC6; the interaction is necessary for the complex to interact with alpha-tubulin, suggesting that these proteins belong to a large complex that deacetylates the cytoskeleton. Interacts with FOXO1; the interaction is disrupted upon serum-starvation or oxidative stress, leading to increased level of acetylated FOXO1 and induction of autophagy. Interacts with RELA; the interaction occurs in the cytoplasm and is increased in a TNF-alpha-dependent manner. Interacts with HOXA10; the interaction is direct. Interacts with YWHAB and YWHAG; the interactions occur in a AKT-dependent manner and increase SIRT2-dependent TP53 deacetylation. Interacts with MAPK1/ERK2 and MAPK3/ERK1; the interactions increase SIRT2 stability and deacetylation activity. Interacts (phosphorylated form) with KMT5A isoform 2; the interaction is direct, stimulates KMT5A-mediated methyltransferase activity on histone at 'Lys-20' (H4K20me1) and is increased in a H(2)O(2)-induced oxidative stress-dependent manner. Interacts with G6PD; the interaction is enhanced by H(2)O(2) treatment. Interacts with a G1/S-specific cyclin E-CDK2 complex. Interacts with AURKA, CDK5R1 (p35 form) and CDK5 and HIF1A. Interacts with the tRNA ligase SARS1; recruited to the VEGFA promoter via interaction with SARS1. Interacts with BEX4; negatively regulates alpha-tubulin deacetylation by SIRT2. Requires Zn(2+) as cofactor. Phosphorylated at phosphoserine and phosphothreonine. Phosphorylated at Ser-368 by a mitotic kinase CDK1/cyclin B at the G2/M transition; phosphorylation regulates the delay in cell-cycle progression. Phosphorylated at Ser-368 by a mitotic kinase G1/S-specific cyclin E/Cdk2 complex; phosphorylation inactivates SIRT2-mediated alpha-tubulin deacetylation and thereby negatively regulates cell adhesion, cell migration and neurite outgrowth during neuronal differentiation. Phosphorylated by cyclin A/Cdk2 and p35-Cdk5 complexes and to a lesser extent by the cyclin D3/Cdk4 and cyclin B/Cdk1, in vitro. Dephosphorylated at Ser-368 by CDC14A and CDC14B around early anaphase. In terms of processing, acetylated by EP300; acetylation leads both to the decreased of SIRT2-mediated alpha-tubulin deacetylase activity and SIRT2-mediated down-regulation of TP53 transcriptional activity. Post-translationally, ubiquitinated.

The protein resides in the nucleus. Its subcellular location is the cytoplasm. It is found in the perinuclear region. It localises to the cytoskeleton. The protein localises to the microtubule organizing center. The protein resides in the centrosome. Its subcellular location is the centriole. It is found in the spindle. It localises to the midbody. The protein localises to the chromosome. The protein resides in the perikaryon. Its subcellular location is the cell projection. It is found in the growth cone. It localises to the myelin membrane. The catalysed reaction is N(6)-acetyl-L-lysyl-[protein] + NAD(+) + H2O = 2''-O-acetyl-ADP-D-ribose + nicotinamide + L-lysyl-[protein]. It carries out the reaction N(6)-tetradecanoyl-L-lysyl-[protein] + NAD(+) + H2O = 2''-O-tetradecanoyl-ADP-D-ribose + nicotinamide + L-lysyl-[protein]. It catalyses the reaction N(6)-hexadecanoyl-L-lysyl-[protein] + NAD(+) + H2O = 2''-O-hexadecanoyl-ADP-D-ribose + nicotinamide + L-lysyl-[protein]. Inhibited by Sirtinol, A3 and M15 small molecules. Inhibited by nicotinamide. In terms of biological role, NAD-dependent protein deacetylase, which deacetylates internal lysines on histone and alpha-tubulin as well as many other proteins such as key transcription factors. Participates in the modulation of multiple and diverse biological processes such as cell cycle control, genomic integrity, microtubule dynamics, cell differentiation, metabolic networks, and autophagy. Plays a major role in the control of cell cycle progression and genomic stability. Functions in the antephase checkpoint preventing precocious mitotic entry in response to microtubule stress agents, and hence allowing proper inheritance of chromosomes. Positively regulates the anaphase promoting complex/cyclosome (APC/C) ubiquitin ligase complex activity by deacetylating CDC20 and FZR1, then allowing progression through mitosis. Associates both with chromatin at transcriptional start sites (TSSs) and enhancers of active genes. Plays a role in cell cycle and chromatin compaction through epigenetic modulation of the regulation of histone H4 'Lys-20' methylation (H4K20me1) during early mitosis. Specifically deacetylates histone H4 at 'Lys-16' (H4K16ac) between the G2/M transition and metaphase enabling H4K20me1 deposition by KMT5A leading to ulterior levels of H4K20me2 and H4K20me3 deposition throughout cell cycle, and mitotic S-phase progression. Deacetylates KMT5A modulating KMT5A chromatin localization during the mitotic stress response. Also deacetylates histone H3 at 'Lys-57' (H3K56ac) during the mitotic G2/M transition. During oocyte meiosis progression, may deacetylate histone H4 at 'Lys-16' (H4K16ac) and alpha-tubulin, regulating spindle assembly and chromosome alignment by influencing microtubule dynamics and kinetochore function. Deacetylates histone H4 at 'Lys-16' (H4K16ac) at the VEGFA promoter and thereby contributes to regulate expression of VEGFA, a key regulator of angiogenesis. Deacetylates alpha-tubulin at 'Lys-40' and hence controls neuronal motility, oligodendroglial cell arbor projection processes and proliferation of non-neuronal cells. Phosphorylation at Ser-368 by a G1/S-specific cyclin E-CDK2 complex inactivates SIRT2-mediated alpha-tubulin deacetylation, negatively regulating cell adhesion, cell migration and neurite outgrowth during neuronal differentiation. Deacetylates PARD3 and participates in the regulation of Schwann cell peripheral myelination formation during early postnatal development and during postinjury remyelination. Involved in several cellular metabolic pathways. Plays a role in the regulation of blood glucose homeostasis by deacetylating and stabilizing phosphoenolpyruvate carboxykinase PCK1 activity in response to low nutrient availability. Acts as a key regulator in the pentose phosphate pathway (PPP) by deacetylating and activating the glucose-6-phosphate G6PD enzyme, and therefore, stimulates the production of cytosolic NADPH to counteract oxidative damage. Maintains energy homeostasis in response to nutrient deprivation as well as energy expenditure by inhibiting adipogenesis and promoting lipolysis. Attenuates adipocyte differentiation by deacetylating and promoting FOXO1 interaction to PPARG and subsequent repression of PPARG-dependent transcriptional activity. Plays a role in the regulation of lysosome-mediated degradation of protein aggregates by autophagy in neuronal cells. Deacetylates FOXO1 in response to oxidative stress or serum deprivation, thereby negatively regulating FOXO1-mediated autophagy. Deacetylates a broad range of transcription factors and co-regulators regulating target gene expression. Deacetylates transcriptional factor FOXO3 stimulating the ubiquitin ligase SCF(SKP2)-mediated FOXO3 ubiquitination and degradation. Deacetylates HIF1A and therefore promotes HIF1A degradation and inhibition of HIF1A transcriptional activity in tumor cells in response to hypoxia. Deacetylates RELA in the cytoplasm inhibiting NF-kappaB-dependent transcription activation upon TNF-alpha stimulation. Inhibits transcriptional activation by deacetylating p53/TP53 and EP300. Also deacetylates EIF5A. Functions as a negative regulator on oxidative stress-tolerance in response to anoxia-reoxygenation conditions. Plays a role as tumor suppressor. In addition to protein deacetylase activity, also has activity toward long-chain fatty acyl groups and mediates protein-lysine demyristoylation and depalmitoylation of target proteins, such as ARF6 and KRAS, thereby regulating their association with membranes. This Macaca fascicularis (Crab-eating macaque) protein is NAD-dependent protein deacetylase sirtuin-2 (SIRT2).